The chain runs to 115 residues: Phosphoribosyl-ATP pyrophosphatase (115 aa).

This sequence belongs to the PRA-PH family.

It is found in the cytoplasm. The catalysed reaction is 1-(5-phospho-beta-D-ribosyl)-ATP + H2O = 1-(5-phospho-beta-D-ribosyl)-5'-AMP + diphosphate + H(+). The protein operates within amino-acid biosynthesis; L-histidine biosynthesis; L-histidine from 5-phospho-alpha-D-ribose 1-diphosphate: step 2/9. This is Phosphoribosyl-ATP pyrophosphatase from Bordetella bronchiseptica (strain ATCC BAA-588 / NCTC 13252 / RB50) (Alcaligenes bronchisepticus).